Reading from the N-terminus, the 585-residue chain is Protein NRT1/ PTR FAMILY 8.3 (585 aa).

Position 2 is an N-acetylglycine (glycine 2). A helical transmembrane segment spans residues 91–111 (WQGTCYLTPLIGAVLADAYWG). Threonine 115 is modified (phosphothreonine). The next 10 helical transmembrane spans lie at 116–136 (IACFSGIYFIGMSALTLSASV), 154–174 (PAQYAMFFGGLYLIALGTGGI), 200–220 (FFNWFYFSINIGALVSSSLLV), 228–248 (WGLGFGIPTVFMGLAIASFFF), 351–371 (FPIWASGIIFSAVYAQMSTMF), 387–407 (LPPAALGTFDTASVIIWVPLY), 431–451 (MGIGLFVSVLCMAAAAIVEII), 472–492 (VLWQIPQYFILGAAEVFYFIG), 511–531 (ALALLTNALGNYLSSLILTLV), and 556–576 (FFWLLAGLSLVNMAVYFFSAA).

The protein belongs to the major facilitator superfamily. Proton-dependent oligopeptide transporter (POT/PTR) (TC 2.A.17) family. Highly expressed in young leaves, roots and germinating seeds, intermediately in stems, flowers and mature leaves and at low level in siliques.

The protein localises to the vacuole membrane. With respect to regulation, inhibited by leucyl-ethionine. Functionally, peptide transporter. Mediates the transport of di- and tripeptides. High affinity, low capacity transporter. Can also transport histidine. This chain is Protein NRT1/ PTR FAMILY 8.3 (NPF8.3), found in Arabidopsis thaliana (Mouse-ear cress).